The chain runs to 203 residues: Reticulon-like protein B12 (203 aa).

The 180-residue stretch at 24–203 folds into the Reticulon domain; it reads VADVMLWRKK…WANPENKKLS (180 aa). Helical transmembrane passes span 34-54, 55-75, and 132-152; these read NVSV…EAFA, YTIF…LFLW, and VAVS…QTLC.

The protein localises to the endoplasmic reticulum membrane. The chain is Reticulon-like protein B12 (RTNLB12) from Arabidopsis thaliana (Mouse-ear cress).